Here is a 403-residue protein sequence, read N- to C-terminus: S-adenosylmethionine synthase (403 aa).

Histidine 15 is an ATP binding site. Aspartate 17 is a binding site for Mg(2+). Position 43 (glutamate 43) interacts with K(+). Positions 56 and 99 each coordinate L-methionine. The segment at 99–109 (QSPDINQGVDR) is flexible loop. ATP-binding positions include 166-168 (DAK), 232-233 (KF), aspartate 241, 247-248 (RK), alanine 264, and lysine 268. Aspartate 241 is a binding site for L-methionine. Lysine 272 serves as a coordination point for L-methionine.

This sequence belongs to the AdoMet synthase family. Homotetramer; dimer of dimers. Mg(2+) serves as cofactor. It depends on K(+) as a cofactor.

It is found in the cytoplasm. The enzyme catalyses L-methionine + ATP + H2O = S-adenosyl-L-methionine + phosphate + diphosphate. It functions in the pathway amino-acid biosynthesis; S-adenosyl-L-methionine biosynthesis; S-adenosyl-L-methionine from L-methionine: step 1/1. Functionally, catalyzes the formation of S-adenosylmethionine (AdoMet) from methionine and ATP. The overall synthetic reaction is composed of two sequential steps, AdoMet formation and the subsequent tripolyphosphate hydrolysis which occurs prior to release of AdoMet from the enzyme. In Xanthomonas axonopodis pv. citri (strain 306), this protein is S-adenosylmethionine synthase.